Here is a 162-residue protein sequence, read N- to C-terminus: Phosphopantetheine adenylyltransferase (162 aa).

T10 is a binding site for substrate. Residues 10 to 11 (TF) and H18 each bind ATP. Residues K42, M74, and R88 each coordinate substrate. ATP-binding positions include 89 to 91 (GLR), E99, and 124 to 130 (YAFLSST).

This sequence belongs to the bacterial CoaD family. As to quaternary structure, homohexamer. The cofactor is Mg(2+).

Its subcellular location is the cytoplasm. The enzyme catalyses (R)-4'-phosphopantetheine + ATP + H(+) = 3'-dephospho-CoA + diphosphate. Its pathway is cofactor biosynthesis; coenzyme A biosynthesis; CoA from (R)-pantothenate: step 4/5. In terms of biological role, reversibly transfers an adenylyl group from ATP to 4'-phosphopantetheine, yielding dephospho-CoA (dPCoA) and pyrophosphate. The chain is Phosphopantetheine adenylyltransferase from Aliivibrio fischeri (strain ATCC 700601 / ES114) (Vibrio fischeri).